Here is a 249-residue protein sequence, read N- to C-terminus: Proteasome activator complex subunit 1 (249 aa).

The tract at residues 55-102 is disordered; sequence SNLKAPLDIPVPDPVKEKEKEERRKQQEKEDKDEKKKGEDEDKGPPCG. Residues 68–98 are compositionally biased toward basic and acidic residues; it reads PVKEKEKEERRKQQEKEDKDEKKKGEDEDKG.

This sequence belongs to the PA28 family. As to quaternary structure, heterodimer of PSME1 and PSME2, which forms a hexameric ring. PSME1 can form homoheptamers.

In terms of biological role, implicated in immunoproteasome assembly and required for efficient antigen processing. The PA28 activator complex enhances the generation of class I binding peptides by altering the cleavage pattern of the proteasome. The protein is Proteasome activator complex subunit 1 (PSME1) of Bos taurus (Bovine).